The chain runs to 589 residues: TAF5-like RNA polymerase II p300/CBP-associated factor-associated factor 65 kDa subunit 5L (589 aa).

Residues 211 to 221 show a composition bias toward polar residues; it reads ASGSSSRSENN. Residues 211 to 230 are disordered; the sequence is ASGSSSRSENNGLEPPDMPS. WD repeat units lie at residues 266-305, 340-379, 382-421, 424-463, 466-505, and 508-547; these read NTEQLLNTAEISPDSKLLAAGFDNSCIKLWSLRSKKLKSE, GHCGPVYSTRFLADSSGLLSCSEDMSIRYWDLGSFTNTVL, GHAYPVWDLDISPYSLYFASGSHDRTARLWSFDRTYPLRI, GHLADVDCVKFHPNSNYLATGSTDKTVRLWSAQQGNSVRL, GHRGPVLSLAFSPNGKYLASAGEDQRLKLWDLASGTLYKE, and GHTDNITSLTFSPDSGLIASASMDNSVRVWDIRNTYCSAP.

Belongs to the WD repeat TAF5 family. In terms of assembly, the PCAF complex is composed of a number of TBP-associated factors (TAFS), such as TAF5, TAF5L, TAF6, TAF6L, TAF9, TAF10 and TAF12, PCAF, and also PCAF-associated factors (PAFs), such as TADA2L/ADA2, TADA3L/ADA3 and SPT3. Component of the STAGA transcription coactivator-HAT complex, at least composed of SUPT3H, GCN5L2, TAF5L, TAF6L, SUPT7L, TADA3L, TAD1L, TAF10, TAF12, TRRAP and TAF9.

It is found in the nucleus. Functions as a component of the PCAF complex. The PCAF complex is capable of efficiently acetylating histones in a nucleosomal context. The PCAF complex could be considered as the human version of the yeast SAGA complex. With TAF6L, acts as an epigenetic regulator essential for somatic reprogramming. Regulates target genes through H3K9ac deposition and MYC recruitment which trigger MYC regulatory network to orchestrate gene expression programs to control embryonic stem cell state. The protein is TAF5-like RNA polymerase II p300/CBP-associated factor-associated factor 65 kDa subunit 5L of Homo sapiens (Human).